The chain runs to 210 residues: Somatotropin (210 aa).

An N-terminal signal peptide occupies residues 1–22 (MGQVFLLMPVLLVSCFLSQGAA). Residue His38 participates in Zn(2+) binding. Cys71 and Cys183 are disulfide-bonded. Glu192 is a Zn(2+) binding site. An intrachain disulfide couples Cys200 to Cys208.

The protein belongs to the somatotropin/prolactin family.

The protein localises to the secreted. In terms of biological role, growth hormone plays an important role in growth control and is involved in the regulation of several anabolic processes. Implicated as an osmoregulatory substance important for seawater adaptation. In Oncorhynchus kisutch (Coho salmon), this protein is Somatotropin (gh).